The chain runs to 1341 residues: DNA-directed RNA polymerase subunit beta (1341 aa).

The protein belongs to the RNA polymerase beta chain family. In terms of assembly, the RNAP catalytic core consists of 2 alpha, 1 beta, 1 beta' and 1 omega subunit. When a sigma factor is associated with the core the holoenzyme is formed, which can initiate transcription.

The catalysed reaction is RNA(n) + a ribonucleoside 5'-triphosphate = RNA(n+1) + diphosphate. Functionally, DNA-dependent RNA polymerase catalyzes the transcription of DNA into RNA using the four ribonucleoside triphosphates as substrates. This Pseudoalteromonas translucida (strain TAC 125) protein is DNA-directed RNA polymerase subunit beta.